A 276-amino-acid polypeptide reads, in one-letter code: MATTGDDTLTITASDYIQHHLTNAKMCSTDGGIAFNYACQDAGFWTWHIDSLLFSVGLGVLFLWLFYKVGQKATIGVPGKLQCFVEMCVEGVDKIVKDSFHGKNAVIAPLGLTIFVWVFLMNLMDLIPVDFVPEAAKRLLGVPYLKIVPTTDLNVTLGLALSVFVLIVFYSIKVKGFSGFTKELTMQPFNHWALIPINFVLETVTLIAKPISLSLRLFGNLYAGELIFILIALMPWWAQFALSVPWAIFHILVIVLQAFIFMMLTIVYLSMAHEDH.

6 helical membrane-spanning segments follow: residues 47–67 (WHID…WLFY), 107–127 (IAPL…MDLI), 152–172 (DLNV…FYSI), 188–208 (PFNH…TLIA), 226–246 (LIFI…SVPW), and 247–267 (AIFH…LTIV).

This sequence belongs to the ATPase A chain family. In terms of assembly, F-type ATPases have 2 components, CF(1) - the catalytic core - and CF(0) - the membrane proton channel. CF(1) has five subunits: alpha(3), beta(3), gamma(1), delta(1), epsilon(1). CF(0) has three main subunits: a(1), b(2) and c(9-12). The alpha and beta chains form an alternating ring which encloses part of the gamma chain. CF(1) is attached to CF(0) by a central stalk formed by the gamma and epsilon chains, while a peripheral stalk is formed by the delta and b chains.

The protein localises to the cell inner membrane. In terms of biological role, key component of the proton channel; it plays a direct role in the translocation of protons across the membrane. In Shewanella halifaxensis (strain HAW-EB4), this protein is ATP synthase subunit a.